A 512-amino-acid polypeptide reads, in one-letter code: D-alanine--D-alanyl carrier protein ligase (512 aa).

ATP is bound at residue 152 to 153 (TS). A D-alanine-binding site is contributed by Asp-199. Residue 294 to 299 (NAYGPT) coordinates ATP. Val-303 contributes to the D-alanine binding site. Residues Asp-385, 397 to 400 (YGGR), and Lys-499 contribute to the ATP site. Residue Lys-499 coordinates D-alanine.

It belongs to the ATP-dependent AMP-binding enzyme family. DltA subfamily.

Its subcellular location is the cytoplasm. It catalyses the reaction holo-[D-alanyl-carrier protein] + D-alanine + ATP = D-alanyl-[D-alanyl-carrier protein] + AMP + diphosphate. It participates in cell wall biogenesis; lipoteichoic acid biosynthesis. Its function is as follows. Catalyzes the first step in the D-alanylation of lipoteichoic acid (LTA), the activation of D-alanine and its transfer onto the D-alanyl carrier protein (Dcp) DltC. In an ATP-dependent two-step reaction, forms a high energy D-alanyl-AMP intermediate, followed by transfer of the D-alanyl residue as a thiol ester to the phosphopantheinyl prosthetic group of the Dcp. D-alanylation of LTA plays an important role in modulating the properties of the cell wall in Gram-positive bacteria, influencing the net charge of the cell wall. In Streptococcus pyogenes serotype M3 (strain SSI-1), this protein is D-alanine--D-alanyl carrier protein ligase.